The sequence spans 319 residues: Ribonuclease Z (319 aa).

Positions 62, 64, 66, 67, 145, 216, and 274 each coordinate Zn(2+). Asp-66 acts as the Proton acceptor in catalysis.

This sequence belongs to the RNase Z family. In terms of assembly, homodimer. It depends on Zn(2+) as a cofactor.

The enzyme catalyses Endonucleolytic cleavage of RNA, removing extra 3' nucleotides from tRNA precursor, generating 3' termini of tRNAs. A 3'-hydroxy group is left at the tRNA terminus and a 5'-phosphoryl group is left at the trailer molecule.. Its function is as follows. Zinc phosphodiesterase, which displays some tRNA 3'-processing endonuclease activity. Probably involved in tRNA maturation, by removing a 3'-trailer from precursor tRNA. The polypeptide is Ribonuclease Z (Synechococcus sp. (strain CC9902)).